A 301-amino-acid polypeptide reads, in one-letter code: Diaminopimelate epimerase (301 aa).

Residues asparagine 15, glutamine 47, and asparagine 67 each contribute to the substrate site. The active-site Proton donor is the cysteine 76. Substrate is bound by residues glycine 77–asparagine 78, asparagine 163, asparagine 197, and glutamate 215–arginine 216. Cysteine 224 functions as the Proton acceptor in the catalytic mechanism. Residue glycine 225–serine 226 participates in substrate binding.

Belongs to the diaminopimelate epimerase family. As to quaternary structure, homodimer.

The protein resides in the cytoplasm. The catalysed reaction is (2S,6S)-2,6-diaminopimelate = meso-2,6-diaminopimelate. It participates in amino-acid biosynthesis; L-lysine biosynthesis via DAP pathway; DL-2,6-diaminopimelate from LL-2,6-diaminopimelate: step 1/1. Its function is as follows. Catalyzes the stereoinversion of LL-2,6-diaminopimelate (L,L-DAP) to meso-diaminopimelate (meso-DAP), a precursor of L-lysine and an essential component of the bacterial peptidoglycan. The protein is Diaminopimelate epimerase of Rhizobium meliloti (strain 1021) (Ensifer meliloti).